We begin with the raw amino-acid sequence, 195 residues long: Pyridoxal 5'-phosphate synthase subunit PdxT (195 aa).

L-glutamine is bound at residue 49–51; that stretch reads GES. Cys-81 serves as the catalytic Nucleophile. Residues Arg-113 and 141 to 142 each bind L-glutamine; that span reads IR. Active-site charge relay system residues include His-177 and Glu-179.

The protein belongs to the glutaminase PdxT/SNO family. In terms of assembly, in the presence of PdxS, forms a dodecamer of heterodimers. Only shows activity in the heterodimer.

The enzyme catalyses aldehydo-D-ribose 5-phosphate + D-glyceraldehyde 3-phosphate + L-glutamine = pyridoxal 5'-phosphate + L-glutamate + phosphate + 3 H2O + H(+). The catalysed reaction is L-glutamine + H2O = L-glutamate + NH4(+). It participates in cofactor biosynthesis; pyridoxal 5'-phosphate biosynthesis. In terms of biological role, catalyzes the hydrolysis of glutamine to glutamate and ammonia as part of the biosynthesis of pyridoxal 5'-phosphate. The resulting ammonia molecule is channeled to the active site of PdxS. The protein is Pyridoxal 5'-phosphate synthase subunit PdxT of Mycolicibacterium vanbaalenii (strain DSM 7251 / JCM 13017 / BCRC 16820 / KCTC 9966 / NRRL B-24157 / PYR-1) (Mycobacterium vanbaalenii).